The primary structure comprises 37 residues: Large ribosomal subunit protein bL36c (37 aa).

It belongs to the bacterial ribosomal protein bL36 family.

The protein resides in the plastid. It localises to the chloroplast. This is Large ribosomal subunit protein bL36c from Oenothera argillicola (Appalachian evening primrose).